The chain runs to 222 residues: UPF0173 metal-dependent hydrolase Mboo_0816 (222 aa).

Belongs to the UPF0173 family.

The chain is UPF0173 metal-dependent hydrolase Mboo_0816 from Methanoregula boonei (strain DSM 21154 / JCM 14090 / 6A8).